Consider the following 269-residue polypeptide: Putative esterase/lipase 1 (269 aa).

Residue H27 is part of the active site. Catalysis depends on S94, which acts as the Charge relay system.

It belongs to the lipase/esterase LIP3/BchO family.

In Mycoplasma pneumoniae (strain ATCC 29342 / M129 / Subtype 1) (Mycoplasmoides pneumoniae), this protein is Putative esterase/lipase 1.